We begin with the raw amino-acid sequence, 495 residues long: Probable aspartic-type endopeptidase OPSB (495 aa).

Positions 1–19 (MRGDSFIWSLATAIPLLST) are cleaved as a signal peptide. The Peptidase A1 domain occupies 73–408 (YFCNLTLGTP…DLDNNEISIA (336 aa)). N76 is a glycosylation site (N-linked (GlcNAc...) asparagine). D91 is an active-site residue. N-linked (GlcNAc...) asparagine glycosylation occurs at N136. Residue D290 is part of the active site. An N-linked (GlcNAc...) asparagine glycan is attached at N413. The disordered stretch occupies residues 447–470 (ATGLPGVETGVPGSRPPSSKAAGQ). A467 carries GPI-anchor amidated alanine lipidation. A propeptide spans 468 to 495 (AGQAKRPDFVLGVAAVGLAGAGMLFAAM) (removed in mature form).

It belongs to the peptidase A1 family.

The protein resides in the cell membrane. Functionally, probable GPI-anchored aspartic-type endopeptidase which contributes to virulence. The protein is Probable aspartic-type endopeptidase OPSB (OPSB) of Arthroderma benhamiae (strain ATCC MYA-4681 / CBS 112371) (Trichophyton mentagrophytes).